Here is a 147-residue protein sequence, read N- to C-terminus: Prefoldin subunit alpha 2 (147 aa).

This sequence belongs to the prefoldin subunit alpha family. Heterohexamer of two alpha and four beta subunits.

The protein localises to the cytoplasm. Molecular chaperone capable of stabilizing a range of proteins. Seems to fulfill an ATP-independent, HSP70-like function in archaeal de novo protein folding. The protein is Prefoldin subunit alpha 2 (pfdA2) of Methanocaldococcus jannaschii (strain ATCC 43067 / DSM 2661 / JAL-1 / JCM 10045 / NBRC 100440) (Methanococcus jannaschii).